The primary structure comprises 653 residues: Fusexin 1 (653 aa).

An N-terminal signal peptide occupies residues 1–23 (MKNGLKASVVALFFLLAASSASA). Residues 24–559 (ATNSVDTVTY…MEKALSGNAG (536 aa)) are Extracellular-facing. Cystine bridges form between C126-C166, C397-C440, C467-C490, and C502-C519. The fusion loop stretch occupies residues 154-159 (DTWTGQ). Residues 560 to 580 (ALTWAQLLLSFIGFLAGFALV) traverse the membrane as a helical segment. At 581–600 (GVKLGKMVDGLATEFIPLSD) the chain is on the cytoplasmic side. 2 helical membrane-spanning segments follow: residues 601–621 (AVVRLGIGLVGGGMAFMAVYQ) and 622–642 (LVTNPLGFLLTVVGLLLTGYL). Residues 643–653 (YLKGTTPDINL) are Cytoplasmic-facing.

The protein belongs to the HAP2/GCS1 family. Fusexin 1 subfamily. Homotrimer stabilized by interdomain contacts and numerous Ca(2+) and Na(+) ions.

The protein localises to the cell surface. It localises to the cell membrane. In terms of biological role, exhibits fusogenic activity. Mediates cell-cell fusion in mammalian cells (bilateral fusion). The polypeptide is Fusexin 1 (Haloferax sp. (strain Q22)).